We begin with the raw amino-acid sequence, 1040 residues long: Multidrug resistance protein MdtB (1040 aa).

12 helical membrane-spanning segments follow: residues 16–36, 347–367, 369–389, 396–416, 440–460, 472–492, 537–557, 863–883, 888–908, 911–931, 968–988, and 998–1018; these read FIMRPVATTLLMVAILLAGII, LMMAIALVVMIIYLFLRNIPA, IIPGVAVPLSLIGTFAVMVFL, LTLMALTIATGFVVDDAIVVI, IGFTIISLTFSLIAVLIPLLF, FAITLAVAILISAVVSLTLTP, WLTLSVALSTLLLSVLLWVFI, LGSTVWLIVAAVVAMYIVLGI, FIHPITILSTLPTAGVGALLA, IAGSELDVIAIIGIILLIGIV, ILMTTLAALLGALPLMLSTGV, and IGMVGGLIVSQVLTLFTTPVI.

Belongs to the resistance-nodulation-cell division (RND) (TC 2.A.6) family. MdtB subfamily. As to quaternary structure, part of a tripartite efflux system composed of MdtA, MdtB and MdtC. MdtB forms a heteromultimer with MdtC.

The protein localises to the cell inner membrane. In terms of biological role, the MdtABC tripartite complex confers resistance against novobiocin and deoxycholate. In Escherichia coli O81 (strain ED1a), this protein is Multidrug resistance protein MdtB.